The sequence spans 489 residues: Inactive receptor-like serine/threonine-protein kinase At2g40270 (489 aa).

An N-terminal signal peptide occupies residues 1–23 (MLFKMRSFVAFVLLLSWFGSCCS). Topologically, residues 24–139 (LKDQAVDFLK…PRNSHSSVPL (116 aa)) are extracellular. Residues 67-130 (KDLPSRKDRK…SAPLANSPIP (64 aa)) form a disordered region. Residues 81-90 (AATTTPSSSP) show a composition bias toward low complexity. Residues 99-116 (TKASTVSEPQKRSSTQDV) are compositionally biased toward polar residues. The segment covering 117 to 130 (SPSPSAPLANSPIP) has biased composition (low complexity). The helical transmembrane segment at 140 to 160 (VVGCVGGAFFLLLVATGLYFF) threads the bilayer. The Cytoplasmic portion of the chain corresponds to 161-489 (TSKAGKTVNP…WAELEVLSTA (329 aa)). The region spanning 200–460 (EDFSNVIGSC…PTMQEVTGWL (261 aa)) is the Protein kinase domain.

This sequence belongs to the protein kinase superfamily. Ser/Thr protein kinase family.

The protein resides in the cell membrane. The protein is Inactive receptor-like serine/threonine-protein kinase At2g40270 of Arabidopsis thaliana (Mouse-ear cress).